A 337-amino-acid chain; its full sequence is Fructose-1,6-bisphosphatase class 1 (337 aa).

Mg(2+) contacts are provided by E89, D112, L114, and D115. Residues 115 to 118, N208, Y241, and K271 contribute to the substrate site; that span reads DGSS. Mg(2+) is bound at residue E277.

The protein belongs to the FBPase class 1 family. Homotetramer. The cofactor is Mg(2+).

Its subcellular location is the cytoplasm. It carries out the reaction beta-D-fructose 1,6-bisphosphate + H2O = beta-D-fructose 6-phosphate + phosphate. Its pathway is carbohydrate biosynthesis; gluconeogenesis. The sequence is that of Fructose-1,6-bisphosphatase class 1 from Psychromonas ingrahamii (strain DSM 17664 / CCUG 51855 / 37).